Reading from the N-terminus, the 315-residue chain is Glycine--tRNA ligase alpha subunit (315 aa).

Belongs to the class-II aminoacyl-tRNA synthetase family. In terms of assembly, tetramer of two alpha and two beta subunits.

The protein resides in the cytoplasm. It carries out the reaction tRNA(Gly) + glycine + ATP = glycyl-tRNA(Gly) + AMP + diphosphate. The chain is Glycine--tRNA ligase alpha subunit from Sorangium cellulosum (strain So ce56) (Polyangium cellulosum (strain So ce56)).